The primary structure comprises 77 residues: Putative defensin-like protein 162 (77 aa).

Residues 1–27 form the signal peptide; it reads MAKQLCSYMFISMFILSAFLALPSAEG. 4 disulfide bridges follow: Cys-34–Cys-77, Cys-44–Cys-63, Cys-49–Cys-71, and Cys-53–Cys-73.

This sequence belongs to the DEFL family.

The protein resides in the secreted. This is Putative defensin-like protein 162 (LCR37) from Arabidopsis thaliana (Mouse-ear cress).